We begin with the raw amino-acid sequence, 267 residues long: D-aminoacyl-tRNA deacylase (267 aa).

It belongs to the DtdA deacylase family. Monomer. The cofactor is Zn(2+).

The enzyme catalyses a D-aminoacyl-tRNA + H2O = a tRNA + a D-alpha-amino acid + H(+). It catalyses the reaction glycyl-tRNA(Ala) + H2O = tRNA(Ala) + glycine + H(+). D-aminoacyl-tRNA deacylase with broad substrate specificity. By recycling D-aminoacyl-tRNA to D-amino acids and free tRNA molecules, this enzyme counteracts the toxicity associated with the formation of D-aminoacyl-tRNA entities in vivo. This Methanothrix thermoacetophila (strain DSM 6194 / JCM 14653 / NBRC 101360 / PT) (Methanosaeta thermophila) protein is D-aminoacyl-tRNA deacylase.